We begin with the raw amino-acid sequence, 127 residues long: MSETKKQPGRLKNRSEFLAVQAGEKRRGSTFLVEVLDRRAPETEPRVGFTVTKRQGNAVERNRMRRRLKEAVRLSAGVAMKPGHDYVIVARRDVLDTAFPKLQSLLIERIEGTAKPKRSQETRSRKE.

Belongs to the RnpA family. As to quaternary structure, consists of a catalytic RNA component (M1 or rnpB) and a protein subunit.

The enzyme catalyses Endonucleolytic cleavage of RNA, removing 5'-extranucleotides from tRNA precursor.. In terms of biological role, RNaseP catalyzes the removal of the 5'-leader sequence from pre-tRNA to produce the mature 5'-terminus. It can also cleave other RNA substrates such as 4.5S RNA. The protein component plays an auxiliary but essential role in vivo by binding to the 5'-leader sequence and broadening the substrate specificity of the ribozyme. The sequence is that of Ribonuclease P protein component from Agrobacterium fabrum (strain C58 / ATCC 33970) (Agrobacterium tumefaciens (strain C58)).